A 496-amino-acid polypeptide reads, in one-letter code: Lysine--tRNA ligase (496 aa).

Mg(2+)-binding residues include Glu407 and Glu414.

The protein belongs to the class-II aminoacyl-tRNA synthetase family. As to quaternary structure, homodimer. Requires Mg(2+) as cofactor.

Its subcellular location is the cytoplasm. The catalysed reaction is tRNA(Lys) + L-lysine + ATP = L-lysyl-tRNA(Lys) + AMP + diphosphate. This is Lysine--tRNA ligase from Staphylococcus haemolyticus (strain JCSC1435).